The sequence spans 120 residues: MHQSSLGVLVLFSLIYLCISVHVPFDLNGWKALRLDNNRVQDSTNLAVEHLAGQLKQPITAFKLEENIPNWDLYRVSFIGTYFKGEEYECHSDVVWIFNPFNVTVFNTGCLPTSQLNFKY.

A signal peptide spans 1–20; that stretch reads MHQSSLGVLVLFSLIYLCIS.

In terms of tissue distribution, component of the acid-insoluble organic matrix of the calcified shell.

The protein resides in the secreted. In Ruditapes philippinarum (Japanese carpet shell), this protein is Insoluble matrix shell protein 2.